The primary structure comprises 556 residues: 2-succinyl-5-enolpyruvyl-6-hydroxy-3-cyclohexene-1-carboxylate synthase (556 aa).

Belongs to the TPP enzyme family. MenD subfamily. Homodimer. The cofactor is Mg(2+). It depends on Mn(2+) as a cofactor. Thiamine diphosphate serves as cofactor.

It catalyses the reaction isochorismate + 2-oxoglutarate + H(+) = 5-enolpyruvoyl-6-hydroxy-2-succinyl-cyclohex-3-ene-1-carboxylate + CO2. The protein operates within quinol/quinone metabolism; 1,4-dihydroxy-2-naphthoate biosynthesis; 1,4-dihydroxy-2-naphthoate from chorismate: step 2/7. It functions in the pathway quinol/quinone metabolism; menaquinone biosynthesis. In terms of biological role, catalyzes the thiamine diphosphate-dependent decarboxylation of 2-oxoglutarate and the subsequent addition of the resulting succinic semialdehyde-thiamine pyrophosphate anion to isochorismate to yield 2-succinyl-5-enolpyruvyl-6-hydroxy-3-cyclohexene-1-carboxylate (SEPHCHC). This chain is 2-succinyl-5-enolpyruvyl-6-hydroxy-3-cyclohexene-1-carboxylate synthase, found in Salmonella paratyphi C (strain RKS4594).